The following is a 278-amino-acid chain: MATHVKTPDQLQESGTGLVHSLAKGLEILSCFSEGELLGNQQLVELTGLPKATVSRLTSTLVKLGYLQVDPRSRKLAMGARVLGLGVSVQRKLGLQRIARPHMEALSQRFGLTVTMGTRDRLSVVLLEVCRPPSLAQLVVNFDAGTHMPLSQTALGLASLVNSPVKDREQVIEGLRKQLGDQWVEARNRIERAHQEHERYGYIVSQRSLGRDVSGVAVGMVPMGSNTPYVFHMAGPSNQMPLSLMRSDMGPALKQMVQDIQAEMRAARPPKLVVPKEF.

The HTH iclR-type domain occupies Val19–Ala80. Residues Asn40 to Ser59 constitute a DNA-binding region (H-T-H motif). The IclR-ED domain occupies Leu95–Ala266.

Functionally, both copies function as additional regulators for the tsa locus, specifically for tsaT. This is HTH-type transcriptional regulator TsaQ1/TsaQ2 (tsaQ1) from Comamonas testosteroni (Pseudomonas testosteroni).